We begin with the raw amino-acid sequence, 551 residues long: Delta-selinene synthase TPS7FN (551 aa).

Residues Arg-266, Asp-303, Asp-307, Arg-444, and Asp-447 each coordinate (2E,6E)-farnesyl diphosphate. Mg(2+) contacts are provided by Asp-303 and Asp-307. The DDXXD motif motif lies at 303–307; it reads DDIYD. Positions 447, 451, and 455 each coordinate Mg(2+).

The protein belongs to the terpene synthase family. Tpsb subfamily. Mg(2+) serves as cofactor. Mn(2+) is required as a cofactor.

The enzyme catalyses (2E,6E)-farnesyl diphosphate = delta-selinene + diphosphate. It catalyses the reaction (2E)-geranyl diphosphate = beta-myrcene + diphosphate. The catalysed reaction is (2E)-geranyl diphosphate = (4S)-limonene + diphosphate. It carries out the reaction (2E,6E)-farnesyl diphosphate + H2O = selina-6-en-4-ol + diphosphate. The protein operates within secondary metabolite biosynthesis; terpenoid biosynthesis. Its function is as follows. Involved in sesquiterpene olefins biosynthesis, constituants of cannabinoids and terpenoids-rich resins. Catalyzes mainly the conversion of (2E)-farnesyl diphosphate to delta-selinene, and also produces minor products such as selina-6-en-4-ol. Can also use (2E)-geranyl diphosphate as substrate with low efficiency, producing minor amounts of myrcene and limonene. This chain is Delta-selinene synthase TPS7FN, found in Cannabis sativa (Hemp).